An 888-amino-acid chain; its full sequence is Transmembrane channel-like protein 2 (888 aa).

The interval Met-1 to Asp-128 is disordered. Residues Met-1–Gly-228 are Cytoplasmic-facing. Composition is skewed to basic and acidic residues over residues Ser-7–Ala-16, Asp-32–Ala-44, and Arg-87–Lys-110. The span at Ser-117–Asp-128 shows a compositional bias: polar residues. A helical transmembrane segment spans residues Ser-229–Pro-266. Over Tyr-267–Tyr-317 the chain is Extracellular. Residues Arg-318–Thr-350 traverse the membrane as a helical segment. Residues Ser-351–His-406 are Cytoplasmic-facing. The helical transmembrane segment at Leu-407 to Ser-437 threads the bilayer. The Extracellular segment spans residues Gln-438–Ser-447. A helical transmembrane segment spans residues Trp-448–Leu-475. The Cytoplasmic segment spans residues Glu-476–His-479. The chain crosses the membrane as a helical span at residues Pro-480–Leu-514. Residues Ser-515–Cys-556 are Extracellular-facing. A helical membrane pass occupies residues Trp-557–Met-594. The Cytoplasmic segment spans residues Asn-595 to Asp-613. The chain crosses the membrane as a helical span at residues Ile-614–Tyr-634. The Extracellular segment spans residues Ala-635–Gly-637. A helical membrane pass occupies residues Leu-638 to Ser-660. Topologically, residues Asn-661–Asn-674 are cytoplasmic. The chain crosses the membrane as a helical span at residues Asn-675 to Ser-698. The Extracellular segment spans residues Leu-699–Gly-741. Residues Leu-742 to Ile-775 traverse the membrane as a helical segment. Topologically, residues Gln-776 to Asn-888 are cytoplasmic. Positions Leu-813–Asn-888 are disordered. 2 stretches are compositionally biased toward polar residues: residues Pro-836–Trp-851 and Gly-866–Lys-881.

The protein belongs to the TMC family. In terms of assembly, forms the MET channel composed of TMC dimer (TMC1 or TMC2), TMIE, TOMT, CIB (CIB2 or CIB3), LHFPL5 and PDH15. The interaction of TMC1 and TMC2 with TOMT is required for the transportation of TMC1/2 into the stereocilia of hair cells. Interacts (via N-terminus) with both isoforms CD1 and CD3 of PCDH15. Can form a heterodimer with TMC1, TMC5 or TMC7. In terms of tissue distribution, inner ear and testis. Expressed in cochlear inner and outer hair cells and vestibular organ hair cells.

It localises to the cell membrane. It carries out the reaction Ca(2+)(in) = Ca(2+)(out). Pore-forming subunit of the mechanotransducer (MET) non-selective cation channel complex located at the tips of stereocilia of cochlear hair cells and that mediates sensory transduction in the auditory system. The MET complex is composed of two dimeric pore-forming ion-conducting transmembrane TMC (TMC1 or TMC2) subunits, several auxiliary proteins including LHFPL5, TMIE, CIB2/3 and TOMT, the tip-link PCDH15, and possibly the PIEZO subunits. MET channel is activated by tension in the tip-link extending from the side wall of one stereocilium to the tip of the adjacent shorter stereocilium, where the channel is located. TMC2 MET channel is highly permeable to calcium and likely transports monovalent cations. Also involved in vestibular hair cell transduction current of the mammalian inner ear. The protein is Transmembrane channel-like protein 2 of Mus musculus (Mouse).